The sequence spans 432 residues: Argininosuccinate lyase (432 aa).

It belongs to the lyase 1 family. Argininosuccinate lyase subfamily.

Its subcellular location is the cytoplasm. It catalyses the reaction 2-(N(omega)-L-arginino)succinate = fumarate + L-arginine. Its pathway is amino-acid biosynthesis; L-arginine biosynthesis; L-arginine from L-ornithine and carbamoyl phosphate: step 3/3. This is Argininosuccinate lyase from Xanthomonas axonopodis pv. citri (strain 306).